The following is a 629-amino-acid chain: tRNA uridine 5-carboxymethylaminomethyl modification enzyme MnmG (629 aa).

FAD contacts are provided by residues 15–20 (GAGHAG), Val127, and Ser182. Positions 203–227 (TPPRVKSSTIDYSKTEEQPGDDHPR) are disordered. Residues 215 to 227 (SKTEEQPGDDHPR) show a composition bias toward basic and acidic residues. An NAD(+)-binding site is contributed by 274-288 (GARYCPSIEDKIVRF). Gln371 is an FAD binding site.

It belongs to the MnmG family. As to quaternary structure, homodimer. Heterotetramer of two MnmE and two MnmG subunits. It depends on FAD as a cofactor.

The protein localises to the cytoplasm. NAD-binding protein involved in the addition of a carboxymethylaminomethyl (cmnm) group at the wobble position (U34) of certain tRNAs, forming tRNA-cmnm(5)s(2)U34. This chain is tRNA uridine 5-carboxymethylaminomethyl modification enzyme MnmG, found in Listeria welshimeri serovar 6b (strain ATCC 35897 / DSM 20650 / CCUG 15529 / CIP 8149 / NCTC 11857 / SLCC 5334 / V8).